The primary structure comprises 263 residues: Purine nucleoside phosphorylase SAS1121 (263 aa).

Zn(2+) is bound by residues H79, C124, and H141.

This sequence belongs to the purine nucleoside phosphorylase YfiH/LACC1 family. As to quaternary structure, homodimer. Cu(2+) is required as a cofactor. It depends on Zn(2+) as a cofactor.

It catalyses the reaction adenosine + phosphate = alpha-D-ribose 1-phosphate + adenine. It carries out the reaction S-methyl-5'-thioadenosine + phosphate = 5-(methylsulfanyl)-alpha-D-ribose 1-phosphate + adenine. The catalysed reaction is inosine + phosphate = alpha-D-ribose 1-phosphate + hypoxanthine. The enzyme catalyses adenosine + H2O + H(+) = inosine + NH4(+). Its function is as follows. Purine nucleoside enzyme that catalyzes the phosphorolysis of adenosine and inosine nucleosides, yielding D-ribose 1-phosphate and the respective free bases, adenine and hypoxanthine. Also catalyzes the phosphorolysis of S-methyl-5'-thioadenosine into adenine and S-methyl-5-thio-alpha-D-ribose 1-phosphate. Also has adenosine deaminase activity. The protein is Purine nucleoside phosphorylase SAS1121 of Staphylococcus aureus (strain MSSA476).